An 89-amino-acid polypeptide reads, in one-letter code: MALLSFLFNSKPKTASAAKERLQIIIARERNGRAGPDFLPALHQELIAVISKYVKVNPDDIKISLNSQGNLEVLDVNVVLPDDAIEAVK.

This sequence belongs to the MinE family.

Functionally, prevents the cell division inhibition by proteins MinC and MinD at internal division sites while permitting inhibition at polar sites. This ensures cell division at the proper site by restricting the formation of a division septum at the midpoint of the long axis of the cell. The polypeptide is Cell division topological specificity factor (Janthinobacterium sp. (strain Marseille) (Minibacterium massiliensis)).